A 650-amino-acid chain; its full sequence is Serine/threonine-protein phosphatase with EF-hands 1 (650 aa).

Residues 16–45 (VIKAALVIQNWYRRYRARLRVRQHYALAIF) enclose the IQ domain. Positions 124–456 (IHILLQAFKQ…PQFFQYQVTS (333 aa)) are catalytic. Mn(2+) is bound by residues Asp-175, His-177, Asp-204, and Asn-236. His-237 acts as the Proton donor in catalysis. His-288 provides a ligand contact to Mn(2+). A disordered region spans residues 315–348 (PVLGNQETGEKRNKSASNYVEPRKVEPDKTPSED). Positions 335-348 (EPRKVEPDKTPSED) are enriched in basic and acidic residues. Residue His-404 coordinates Mn(2+). 3 consecutive EF-hand domains span residues 484–519 (SRKTDLINAFELRDHSRSGRISLAEWAFSMENILGL), 567–602 (RYRSDLKIIFNIIDSDQSGLISMDEFRTMWKLFNAH), and 607–642 (IDDSQIDELASIVDFNKDGNIDFNEFLKAFYVVHKY). The Ca(2+) site is built by Asp-497, Ser-499, Ser-501, Arg-503, Glu-508, Asp-580, Asp-582, Ser-584, Glu-591, Asp-620, Asn-622, Asp-624, Asn-626, and Glu-631.

The protein belongs to the PPP phosphatase family. The cofactor is Mn(2+). Mg(2+) is required as a cofactor. As to expression, in the embryo it is almost exclusively expressed in the peripheral nervous system, within sensory neurons of cranial and dorsal root ganglia. Otherwise found in fetal inner ear and a small group of neurons in the midbrain/pons junction.

It carries out the reaction O-phospho-L-seryl-[protein] + H2O = L-seryl-[protein] + phosphate. It catalyses the reaction O-phospho-L-threonyl-[protein] + H2O = L-threonyl-[protein] + phosphate. Its activity is regulated as follows. Activated by calcium. In terms of biological role, may have a role in the recovery or adaptation response of photoreceptors. May have a role in diverse sensory neurons and in development. This chain is Serine/threonine-protein phosphatase with EF-hands 1 (Ppef1), found in Mus musculus (Mouse).